Reading from the N-terminus, the 188-residue chain is Elongation factor P-like protein (188 aa).

This sequence belongs to the elongation factor P family.

The polypeptide is Elongation factor P-like protein (Xylella fastidiosa (strain 9a5c)).